The following is a 499-amino-acid chain: Chaperone SurA (499 aa).

Positions 1 to 36 (MKRQEFALFSLTLMLSPWRRVLLPAVLAAMAGPALA) are cleaved as a signal peptide. PpiC domains follow at residues 231–333 (PTEF…KLTA) and 352–450 (ITQT…QVEN).

The protein localises to the periplasm. It carries out the reaction [protein]-peptidylproline (omega=180) = [protein]-peptidylproline (omega=0). Chaperone involved in the correct folding and assembly of outer membrane proteins. Recognizes specific patterns of aromatic residues and the orientation of their side chains, which are found more frequently in integral outer membrane proteins. May act in both early periplasmic and late outer membrane-associated steps of protein maturation. The chain is Chaperone SurA from Cupriavidus pinatubonensis (strain JMP 134 / LMG 1197) (Cupriavidus necator (strain JMP 134)).